Consider the following 366-residue polypeptide: ERCC4 domain-containing protein EP364R (366 aa).

The ERCC4 domain occupies 3–101; that stretch reads FLVADHREHH…QLYFFVEGPA (99 aa).

The protein belongs to the asfivirus EP364R family.

In terms of biological role, plays a role in the inhibition of type I interferon signaling pathway. Mechanistically, specifically interacts with 2',3'-cGAMP and cleaves it via its phosphodiesterase activity. In turn, prevents 2',3'-cGAMP interaction with host ER-resident STING1 leading to inhibition of downstream signaling pathway and type I interferon production. This is ERCC4 domain-containing protein EP364R from African swine fever virus (isolate Pig/Kenya/KEN-50/1950) (ASFV).